A 418-amino-acid chain; its full sequence is Gamma-glutamyl phosphate reductase (418 aa).

It belongs to the gamma-glutamyl phosphate reductase family.

The protein localises to the cytoplasm. It catalyses the reaction L-glutamate 5-semialdehyde + phosphate + NADP(+) = L-glutamyl 5-phosphate + NADPH + H(+). The protein operates within amino-acid biosynthesis; L-proline biosynthesis; L-glutamate 5-semialdehyde from L-glutamate: step 2/2. Its function is as follows. Catalyzes the NADPH-dependent reduction of L-glutamate 5-phosphate into L-glutamate 5-semialdehyde and phosphate. The product spontaneously undergoes cyclization to form 1-pyrroline-5-carboxylate. This chain is Gamma-glutamyl phosphate reductase, found in Marinobacter nauticus (strain ATCC 700491 / DSM 11845 / VT8) (Marinobacter aquaeolei).